Consider the following 241-residue polypeptide: MFLQTYETYNSINDRDLKEKNVVVIDTLRATSVITTALFNGAKEVIPVSEVEEAIELSKNFDRDTFLLAGERNSQKIEGFDLSNSPLEYVPEKVKGKTIIFTTTNGTRALKKVASAEEVILGCLLNVSAVARYISKSNKDTVIVCAGTEGKFSFDDILTAGAIYEKLKSLTDFESDDLSKASYFLYKPYENNLYDIMKYGYHLRRLEELGYTEDIKFCLTVDKFDIVPKLKNGIVRTSQDF.

This sequence belongs to the ComB family. Mg(2+) is required as a cofactor.

It carries out the reaction (2R)-O-phospho-3-sulfolactate + H2O = (2R)-3-sulfolactate + phosphate. The polypeptide is Probable 2-phosphosulfolactate phosphatase (Caldanaerobacter subterraneus subsp. tengcongensis (strain DSM 15242 / JCM 11007 / NBRC 100824 / MB4) (Thermoanaerobacter tengcongensis)).